Reading from the N-terminus, the 264-residue chain is ATP synthase subunit a (264 aa).

7 consecutive transmembrane segments (helical) span residues 30–50 (WNID…WLFY), 90–110 (IAPL…MDMI), 111–131 (PVDW…KVVP), 134–154 (DVNI…YYSI), 177–197 (IPVN…SLAL), 208–228 (LIFI…ALGV), and 235–255 (LIFH…LTIV).

This sequence belongs to the ATPase A chain family. As to quaternary structure, F-type ATPases have 2 components, CF(1) - the catalytic core - and CF(0) - the membrane proton channel. CF(1) has five subunits: alpha(3), beta(3), gamma(1), delta(1), epsilon(1). CF(0) has three main subunits: a(1), b(2) and c(9-12). The alpha and beta chains form an alternating ring which encloses part of the gamma chain. CF(1) is attached to CF(0) by a central stalk formed by the gamma and epsilon chains, while a peripheral stalk is formed by the delta and b chains.

It localises to the cell inner membrane. Functionally, key component of the proton channel; it plays a direct role in the translocation of protons across the membrane. The chain is ATP synthase subunit a from Shewanella frigidimarina (strain NCIMB 400).